Reading from the N-terminus, the 282-residue chain is Cell division protein DivIB (282 aa).

At 1 to 59 (MLDDRSAIEHHKYSQRLTELERRSAAAQQRQQKKKPPKMHVGNKIRGIKIKRYVSNGER) the chain is on the cytoplasmic side. A disordered region spans residues 19-41 (ELERRSAAAQQRQQKKKPPKMHV). Residues 31-41 (QQKKKPPKMHV) are compositionally biased toward basic residues. The helical transmembrane segment at 60–80 (VLKLVVLFSAILLFMLYIISP) threads the bilayer. Residues 81-282 (LSKITTLHVT…YSYDYGSKDK (202 aa)) lie on the Extracellular side of the membrane. Positions 82–153 (SKITTLHVTG…QSLQISVKEN (72 aa)) constitute a POTRA domain.

Belongs to the FtsQ/DivIB family. DivIB subfamily.

The protein resides in the cell membrane. Functionally, cell division protein that may be involved in stabilizing or promoting the assembly of the division complex. The polypeptide is Cell division protein DivIB (Limosilactobacillus reuteri (strain ATCC 55730 / SD2112) (Lactobacillus reuteri)).